Reading from the N-terminus, the 397-residue chain is MAKLDFDRSKPHVNIGTIGHVDHGKTTLTAAIATVLAKKGLAEARDYASIDNAPEEKARGITINTSHIEYQTEKRHYAHVDCPGHADYVKNMITGAAQMDGAILVVAATDGPMPQTREHILLARQVGVPKIVVFLNKIDMFKDDEREEMVGLVEMDVRSLLSEYGFDGDNAPIIAGSALKALQGDPEYEKGILELMDAVDTYIEEPKRETDKPFLMAVEDVFTITGRGTVATGRVERGVLQLNEEVEIVGLKPTKKTVVTGIEMFRKNLKEAQAGDNAGLLLRGIDRSEVERGQVLAKPKTIVPHTQFEATVYVLKKEEGGRHTPFFHNYKPQFYFRTTDVTGGIEFKPGREMVVPGDNVELTVTLIAPIAIEEGTKFSIREGGRTVGAGSVTKILK.

Residues 10–207 (KPHVNIGTIG…AVDTYIEEPK (198 aa)) form the tr-type G domain. Residues 19–26 (GHVDHGKT) are G1. 19-26 (GHVDHGKT) is a binding site for GTP. Thr-26 is a binding site for Mg(2+). Positions 60 to 64 (GITIN) are G2. Residues 81–84 (DCPG) are G3. GTP-binding positions include 81–85 (DCPGH) and 136–139 (NKID). The interval 136–139 (NKID) is G4. Residues 177–179 (SAL) are G5.

The protein belongs to the TRAFAC class translation factor GTPase superfamily. Classic translation factor GTPase family. EF-Tu/EF-1A subfamily. In terms of assembly, monomer.

Its subcellular location is the cytoplasm. It carries out the reaction GTP + H2O = GDP + phosphate + H(+). In terms of biological role, GTP hydrolase that promotes the GTP-dependent binding of aminoacyl-tRNA to the A-site of ribosomes during protein biosynthesis. The protein is Elongation factor Tu of Metamycoplasma hominis (strain ATCC 23114 / DSM 25592 / NBRC 14850 / NCTC 10111 / PG21) (Mycoplasma hominis).